The primary structure comprises 211 residues: Uracil phosphoribosyltransferase (211 aa).

Residues Arg77, Arg102, and 129–137 contribute to the 5-phospho-alpha-D-ribose 1-diphosphate site; that span reads DPMLATGGS. Uracil contacts are provided by residues Ile192 and 197–199; that span reads GDA. Asp198 is a binding site for 5-phospho-alpha-D-ribose 1-diphosphate.

It belongs to the UPRTase family. The cofactor is Mg(2+).

The catalysed reaction is UMP + diphosphate = 5-phospho-alpha-D-ribose 1-diphosphate + uracil. The protein operates within pyrimidine metabolism; UMP biosynthesis via salvage pathway; UMP from uracil: step 1/1. Allosterically activated by GTP. Its function is as follows. Catalyzes the conversion of uracil and 5-phospho-alpha-D-ribose 1-diphosphate (PRPP) to UMP and diphosphate. The chain is Uracil phosphoribosyltransferase from Corynebacterium glutamicum (strain R).